We begin with the raw amino-acid sequence, 202 residues long: Dual-action ribosomal maturation protein DarP (202 aa).

A compositionally biased stretch (low complexity) spans 1–13 (MPPMTRNTRNNPN). Positions 1–39 (MPPMTRNTRNNPNGRFPGAFAPEDEDDLPKSKSQRKRDM) are disordered.

It belongs to the DarP family.

It is found in the cytoplasm. In terms of biological role, member of a network of 50S ribosomal subunit biogenesis factors which assembles along the 30S-50S interface, preventing incorrect 23S rRNA structures from forming. Promotes peptidyl transferase center (PTC) maturation. This chain is Dual-action ribosomal maturation protein DarP, found in Cupriavidus metallidurans (strain ATCC 43123 / DSM 2839 / NBRC 102507 / CH34) (Ralstonia metallidurans).